Reading from the N-terminus, the 376-residue chain is Methionine import ATP-binding protein MetN 1 (376 aa).

Residues 34 to 273 enclose the ABC transporter domain; the sequence is VRFINLGKTY…PQHEVSKTLL (240 aa). 70 to 77 serves as a coordination point for ATP; the sequence is GRSGAGKS.

The protein belongs to the ABC transporter superfamily. Methionine importer (TC 3.A.1.24) family. As to quaternary structure, the complex is composed of two ATP-binding proteins (MetN), two transmembrane proteins (MetI) and a solute-binding protein (MetQ).

It is found in the cell inner membrane. The catalysed reaction is L-methionine(out) + ATP + H2O = L-methionine(in) + ADP + phosphate + H(+). It carries out the reaction D-methionine(out) + ATP + H2O = D-methionine(in) + ADP + phosphate + H(+). Its function is as follows. Part of the ABC transporter complex MetNIQ involved in methionine import. Responsible for energy coupling to the transport system. This is Methionine import ATP-binding protein MetN 1 from Pseudomonas syringae pv. tomato (strain ATCC BAA-871 / DC3000).